The primary structure comprises 172 residues: Peptidyl-prolyl cis-trans isomerase CYP18-4 (172 aa).

Residues Phe-7–Gln-170 form the PPIase cyclophilin-type domain.

This sequence belongs to the cyclophilin-type PPIase family. In terms of assembly, interacts with A.tumefaciens VirD2. In terms of tissue distribution, ubiquitous, with higher levels in roots and flowers. Confined to vascular tissues. Also detected in stigmas, base of siliques and anthers.

The protein localises to the cytoplasm. It catalyses the reaction [protein]-peptidylproline (omega=180) = [protein]-peptidylproline (omega=0). Binds cyclosporin A (CsA). CsA mediates some of its effects via an inhibitory action on PPIase. In terms of biological role, PPIases accelerate the folding of proteins. It catalyzes the cis-trans isomerization of proline imidic peptide bonds in oligopeptides. This Arabidopsis thaliana (Mouse-ear cress) protein is Peptidyl-prolyl cis-trans isomerase CYP18-4 (CYP18-4).